Consider the following 1028-residue polypeptide: Contactin-3 (1028 aa).

A signal peptide spans 1–19 (MMLSWKQLILLSFIGCLAG). 6 consecutive Ig-like C2-type domains span residues 26-117 (PVFV…AKLQ), 122-208 (ENFK…ARVL), 227-313 (PKIE…GRLT), 318-402 (PYWV…AELK), 408-497 (PDFS…LVVT), and 499-593 (PTRI…AELI). Cystine bridges form between Cys50-Cys100, Cys144-Cys196, Cys249-Cys297, Cys339-Cys386, and Cys431-Cys479. Residues Asn65 and Asn193 are each glycosylated (N-linked (GlcNAc...) asparagine). N-linked (GlcNAc...) asparagine glycosylation is found at Asn377, Asn468, Asn489, and Asn538. The cysteines at positions 521 and 577 are disulfide-linked. Fibronectin type-III domains follow at residues 600–698 (PPEN…TEEA), 703–800 (APSE…SAEE), 805–901 (APSH…TKKT), and 902–998 (PPSQ…TSMD). Positions 684–714 (GEPSLPSEKVRTEEAAPEVAPSEVSGGGGSR) are disordered. 6 N-linked (GlcNAc...) asparagine glycosylation sites follow: Asn765, Asn860, Asn895, Asn913, Asn931, and Asn956. Ser1002 carries the GPI-anchor amidated serine lipid modification. The propeptide at 1003 to 1028 (TSAISDIHPVSGYISVLLFFIVNALW) is removed in mature form.

The protein belongs to the immunoglobulin superfamily. Contactin family. In terms of assembly, interacts with PTPRG. Specifically expressed in brain. Not expressed in peripheral tissues such as heart, lung, liver, spleen, kidney and skeletal muscle. In brain, it is restricted to subsets of neurons such as Purkinje cells of the cerebellum, granule cells of the dentate gyrus, and neurons in the superficial layers of the cerebral cortex.

The protein resides in the cell membrane. Functionally, contactins mediate cell surface interactions during nervous system development. Has some neurite outgrowth-promoting activity. The protein is Contactin-3 (Cntn3) of Rattus norvegicus (Rat).